A 206-amino-acid polypeptide reads, in one-letter code: uncharacterized protein (206 aa).

Positions 1-18 (MKTYSLLLGLFISFGVLA) are cleaved as a signal peptide.

This is an uncharacterized protein from Haemophilus influenzae (strain ATCC 51907 / DSM 11121 / KW20 / Rd).